A 91-amino-acid polypeptide reads, in one-letter code: DNA-directed RNA polymerase subunit omega (91 aa).

The disordered stretch occupies residues 66-91 (QMPPPLPNFPGAANREATGAEDAAGE).

It belongs to the RNA polymerase subunit omega family. As to quaternary structure, the RNAP catalytic core consists of 2 alpha, 1 beta, 1 beta' and 1 omega subunit. When a sigma factor is associated with the core the holoenzyme is formed, which can initiate transcription.

The enzyme catalyses RNA(n) + a ribonucleoside 5'-triphosphate = RNA(n+1) + diphosphate. Its function is as follows. Promotes RNA polymerase assembly. Latches the N- and C-terminal regions of the beta' subunit thereby facilitating its interaction with the beta and alpha subunits. The protein is DNA-directed RNA polymerase subunit omega of Acidithiobacillus ferrooxidans (strain ATCC 23270 / DSM 14882 / CIP 104768 / NCIMB 8455) (Ferrobacillus ferrooxidans (strain ATCC 23270)).